We begin with the raw amino-acid sequence, 692 residues long: MTDLNPTARAAGLRALLHRYNHEYYVLDAPSVPDAEYDRLFRELEALEAAHPELASADSPTRRVGGAPLAAFASVTHRLPMLSLNNVFSDMQDSDPAGRHAELAAFDQRVRDGLGLDEVEYAVEPKFDGLAVSLVYEHGVLVQGATRGDGETGENVTENLRTVRSIPLRLENAPGDDLFAPAVVPARLEVRGEVLMLKRDFERLNSEQDAAGLKRFANPRNAAAGSLRQLDSRITASRRLTFFAYAVAEADGVSLPATHSATMDWLAGLGLPVSRQRSVVRGLAGLTGAYEAMLAQRAGLPFDIDGVVYKVNRLSEQARLGFVSRAPRFAVAHKFPAEEALTVVEDITVQVGRTGAITPVARLQPVFVGGVTVTNATLHNEDEVRRKDVHVGDTVIVRRAGDVIPEVVSVLAERRPPQARAFEMPLVCPVCGSHIVREADEAVARCSGGLYCSAQHKQALQHFASRKALDVEGLGEKLVDQLVDAGLVHTPADLFALDQPALARLERMGDKSAENLVRALDACRHTTLARFVYALGIRNVGEATARDLARHFGTLDALMAADQDMLMTAPDVGPIVARSIVDFFAEAHNREVVDALLAAGVSWPVVETVTSAGVAGVSGKTFVLTGTLPTLGRDDAKARIEAAGGKVTGSVSKKTHYVVAGEAAGSKLDKAHELGITVLDEAALLALLAGNA.

Residues D34–D38, S83–L84, and E124 each bind NAD(+). Catalysis depends on K126, which acts as the N6-AMP-lysine intermediate. NAD(+) contacts are provided by R147, E193, K310, and K334. Residues C428, C431, C446, and C452 each coordinate Zn(2+). A BRCT domain is found at A612–A692.

This sequence belongs to the NAD-dependent DNA ligase family. LigA subfamily. The cofactor is Mg(2+). Requires Mn(2+) as cofactor.

The catalysed reaction is NAD(+) + (deoxyribonucleotide)n-3'-hydroxyl + 5'-phospho-(deoxyribonucleotide)m = (deoxyribonucleotide)n+m + AMP + beta-nicotinamide D-nucleotide.. In terms of biological role, DNA ligase that catalyzes the formation of phosphodiester linkages between 5'-phosphoryl and 3'-hydroxyl groups in double-stranded DNA using NAD as a coenzyme and as the energy source for the reaction. It is essential for DNA replication and repair of damaged DNA. The sequence is that of DNA ligase from Laribacter hongkongensis (strain HLHK9).